The chain runs to 111 residues: Ig kappa chain V-III region PC 7940 (111 aa).

The tract at residues 1–23 is framework-1; that stretch reads DIVLTQSPASLAVSLGQRATISC. Residues C23 and C92 are joined by a disulfide bond. The complementarity-determining-1 stretch occupies residues 24-38; sequence RASKSVSAFGYSYMH. The framework-2 stretch occupies residues 39–53; the sequence is WYQQKPGQPPKLLIY. The segment at 54 to 60 is complementarity-determining-2; the sequence is LASNLES. The interval 61 to 92 is framework-3; that stretch reads GVPARFSGSGSGTDFTLNIHPVEEEDAVTYYC. The interval 93-101 is complementarity-determining-3; that stretch reads QHSRELPPT. The tract at residues 102 to 111 is framework-4; the sequence is FGGGTKLEIK.

The chain is Ig kappa chain V-III region PC 7940 from Mus musculus (Mouse).